The following is a 296-amino-acid chain: Urease accessory protein UreD (296 aa).

Belongs to the UreD family. UreD, UreF and UreG form a complex that acts as a GTP-hydrolysis-dependent molecular chaperone, activating the urease apoprotein by helping to assemble the nickel containing metallocenter of UreC. The UreE protein probably delivers the nickel.

Its subcellular location is the cytoplasm. Functionally, required for maturation of urease via the functional incorporation of the urease nickel metallocenter. In Nitrosococcus oceani (strain ATCC 19707 / BCRC 17464 / JCM 30415 / NCIMB 11848 / C-107), this protein is Urease accessory protein UreD.